The chain runs to 372 residues: DNA/RNA-binding protein ALBA4 (372 aa).

It belongs to the histone-like Alba family. Identified in a TARE6-associated complex consisting of over 30 proteins and including ALBA1, ALBA2 and ALBA4; the complex binds to the non-coding subtelomeric repeat region TARE6.

The protein localises to the nucleus. Its subcellular location is the chromosome. It localises to the telomere. It is found in the cytoplasm. In terms of biological role, possesses DNA- and RNA-binding activities. Binds to DNA fragments longer than 14 base pairs with relaxed sequence specificity. Associates with the subtelomeric TARE6 repeats. Regulates the abundance of transcript sub-populations in a stage-specific manner. Regulates activation of male gametocytes. Participates in the coordination of sporozoite development in the oocyst. This chain is DNA/RNA-binding protein ALBA4, found in Plasmodium falciparum (isolate 3D7).